The sequence spans 163 residues: Shikimate kinase (163 aa).

10-15 is a binding site for ATP; sequence GVGKTT. T14 serves as a coordination point for Mg(2+). The substrate site is built by D28, R52, and G75. R116 serves as a coordination point for ATP. R134 contributes to the substrate binding site.

The protein belongs to the shikimate kinase family. As to quaternary structure, monomer. Requires Mg(2+) as cofactor.

It localises to the cytoplasm. The catalysed reaction is shikimate + ATP = 3-phosphoshikimate + ADP + H(+). Its pathway is metabolic intermediate biosynthesis; chorismate biosynthesis; chorismate from D-erythrose 4-phosphate and phosphoenolpyruvate: step 5/7. Catalyzes the specific phosphorylation of the 3-hydroxyl group of shikimic acid using ATP as a cosubstrate. The chain is Shikimate kinase from Streptococcus suis (strain 98HAH33).